Here is a 305-residue protein sequence, read N- to C-terminus: tRNA pseudouridine synthase B (305 aa).

The active-site Nucleophile is aspartate 41.

Belongs to the pseudouridine synthase TruB family. Type 1 subfamily.

It carries out the reaction uridine(55) in tRNA = pseudouridine(55) in tRNA. In terms of biological role, responsible for synthesis of pseudouridine from uracil-55 in the psi GC loop of transfer RNAs. The sequence is that of tRNA pseudouridine synthase B from Prochlorococcus marinus subsp. pastoris (strain CCMP1986 / NIES-2087 / MED4).